We begin with the raw amino-acid sequence, 505 residues long: Glutamate--tRNA ligase (505 aa).

A 'HIGH' region motif is present at residues Pro12–Gly22. The 'KMSKS' region signature appears at Lys260–Arg264. An ATP-binding site is contributed by Lys263.

Belongs to the class-I aminoacyl-tRNA synthetase family. Glutamate--tRNA ligase type 1 subfamily. In terms of assembly, monomer.

It is found in the cytoplasm. It catalyses the reaction tRNA(Glu) + L-glutamate + ATP = L-glutamyl-tRNA(Glu) + AMP + diphosphate. Catalyzes the attachment of glutamate to tRNA(Glu) in a two-step reaction: glutamate is first activated by ATP to form Glu-AMP and then transferred to the acceptor end of tRNA(Glu). This chain is Glutamate--tRNA ligase, found in Parabacteroides distasonis (strain ATCC 8503 / DSM 20701 / CIP 104284 / JCM 5825 / NCTC 11152).